We begin with the raw amino-acid sequence, 280 residues long: Beta-lactamase OXA-58 (280 aa).

The signal sequence occupies residues 1-18 (MKLLKILSLVCLSISIGA). Residue cysteine 19 is the site of N-palmitoyl cysteine attachment. Cysteine 19 is lipidated: S-diacylglycerol cysteine. Serine 83 (acyl-ester intermediate) is an active-site residue. A beta-lactam contacts are provided by serine 83, lysine 86, serine 130, serine 221, tryptophan 223, and arginine 263. N6-carboxylysine is present on lysine 86.

It belongs to the class-D beta-lactamase family. In terms of assembly, monomer. Dimer. In terms of processing, carboxylated on the epsilon-amino group of a lysine, with the resulting carbamate functional group serving as a general base. Probably N-carboxylated at Lys-86 at neutral pH in vivo and undergoes complete N-decarboxylation, at pH 4.1, in vitro. N-carboxylation at Lys-86 probably increases catalytic activity under physiological conditions.

It localises to the cell membrane. The catalysed reaction is a beta-lactam + H2O = a substituted beta-amino acid. Activated approximately 3-fold by the presence of 0.1M NaHCO3. In terms of biological role, class D beta-lactamase which confers resistance to the beta-lactam antibiotics, including penicillins and oxacillin, and moderate resistance to carbapenems such as imipenem; in the DH10B strain of E.coli. Acts via hydrolysis of the beta-lactam ring. Has benzylpenicillin-, oxacillin-, cephalothin- and imipenem-hydrolyzing activities. The protein is Beta-lactamase OXA-58 of Acinetobacter baumannii.